A 762-amino-acid chain; its full sequence is Hyperosmolality-gated Ca2+ permeable channel 2.2 (762 aa).

10 consecutive transmembrane segments (helical) span residues 3 to 23 (VSALLTSAGINIAICVVLVSL), 90 to 110 (MVICSIRIFSIVAVVCLAFVL), 144 to 164 (LWVHCLSLYIISSAACALLYF), 354 to 374 (IATLVGAIAFMFVFLFPVTFV), 402 to 422 (VITGYLPSVILVLFFYTVPPL), 445 to 465 (KILYFTIWNVFFVNILSGSVI), 500 to 520 (GWAGLACEIMQPVGLIWNLIA), 557 to 577 (VIAPLILPFLLIYFFFAYLIY), 594 to 614 (QYWPVFHNTTIFSLILSQVIA), and 615 to 635 (LGFFGLKLSTVASGFTIPLIL).

This sequence belongs to the CSC1 (TC 1.A.17) family.

The protein localises to the membrane. Functionally, acts as an osmosensitive calcium-permeable cation channel. In Arabidopsis thaliana (Mouse-ear cress), this protein is Hyperosmolality-gated Ca2+ permeable channel 2.2.